The chain runs to 622 residues: 1-deoxy-D-xylulose-5-phosphate synthase (622 aa).

Thiamine diphosphate contacts are provided by residues His74 and 115 to 117 (GHS). Asp146 contributes to the Mg(2+) binding site. Thiamine diphosphate contacts are provided by residues 147 to 148 (GA), Asn177, Phe285, and Glu366. Position 177 (Asn177) interacts with Mg(2+).

It belongs to the transketolase family. DXPS subfamily. In terms of assembly, homodimer. Mg(2+) is required as a cofactor. The cofactor is thiamine diphosphate.

The catalysed reaction is D-glyceraldehyde 3-phosphate + pyruvate + H(+) = 1-deoxy-D-xylulose 5-phosphate + CO2. It participates in metabolic intermediate biosynthesis; 1-deoxy-D-xylulose 5-phosphate biosynthesis; 1-deoxy-D-xylulose 5-phosphate from D-glyceraldehyde 3-phosphate and pyruvate: step 1/1. Catalyzes the acyloin condensation reaction between C atoms 2 and 3 of pyruvate and glyceraldehyde 3-phosphate to yield 1-deoxy-D-xylulose-5-phosphate (DXP). This Magnetococcus marinus (strain ATCC BAA-1437 / JCM 17883 / MC-1) protein is 1-deoxy-D-xylulose-5-phosphate synthase.